Consider the following 162-residue polypeptide: Phenazine biosynthesis protein PhzA2 (162 aa).

This sequence belongs to the PhzA/PhzB family.

It functions in the pathway antibiotic biosynthesis; phenazine biosynthesis. Involved in the biosynthesis of the antibiotic phenazine, a nitrogen-containing heterocyclic molecule having important roles in virulence, competition and biological control. PhzA2 (operon phzA2B2C2E2F2G2) has a role in the biosynthesis of the phenazine during both planktonic growth and biofilm development, and in host infection during biofilm development. The sequence is that of Phenazine biosynthesis protein PhzA2 from Pseudomonas aeruginosa (strain ATCC 15692 / DSM 22644 / CIP 104116 / JCM 14847 / LMG 12228 / 1C / PRS 101 / PAO1).